A 479-amino-acid chain; its full sequence is RAC-gamma serine/threonine-protein kinase (479 aa).

The residue at position 2 (Ser2) is an N-acetylserine. The 103-residue stretch at Thr5–Asp107 folds into the PH domain. Cys59 and Cys76 are disulfide-bonded. The Protein kinase domain maps to Phe148 to Phe405. ATP is bound by residues Leu154–Val162 and Lys177. The active-site Proton acceptor is Asp271. Cys293 and Cys307 are joined by a disulfide. An O-linked (GlcNAc) threonine glycan is attached at Thr302. Thr305 carries the phosphothreonine; by PDPK1 modification. An O-linked (GlcNAc) threonine glycan is attached at Thr309. Residues Ser406–Glu479 form the AGC-kinase C-terminal domain. Residues Thr445–Glu479 form a disordered region. Thr447 carries the phosphothreonine modification. Ser472 is subject to Phosphoserine; by PKC/PRKCZ. Ser472 is a glycosylation site (O-linked (GlcNAc) serine; alternate).

This sequence belongs to the protein kinase superfamily. AGC Ser/Thr protein kinase family. RAC subfamily. In terms of assembly, interacts (via PH domain) with TCL1A; this enhances AKT3 phosphorylation and activation. Interacts with TRAF6. Interacts with KCTD20. Interacts with BTBD10. Phosphorylation on Thr-305 and Ser-472 is required for full activity. Phosphorylation of the activation loop at Thr-305 by PDPK1/PDK1 is a prerequisite for full activation. Phosphorylation at Ser-472 by mTORC2 in response to growth factors plays a key role in AKT1 activation by facilitating subsequent phosphorylation of the activation loop by PDPK1/PDK1. Post-translationally, ubiquitinated. When fully phosphorylated and translocated into the nucleus, undergoes 'Lys-48'-polyubiquitination catalyzed by TTC3, leading to its degradation by the proteasome. In terms of processing, O-GlcNAcylation at Thr-302 and Thr-309 inhibits activating phosphorylation at Thr-305 via disrupting the interaction between AKT and PDPK1/PDK1. As to expression, isoform 1 is expressed in prostate, testis, uterus and mammary gland and isoform 2 is expressed in prostate, testis and mammary gland.

Its subcellular location is the nucleus. The protein localises to the cytoplasm. It localises to the membrane. It carries out the reaction L-seryl-[protein] + ATP = O-phospho-L-seryl-[protein] + ADP + H(+). It catalyses the reaction L-threonyl-[protein] + ATP = O-phospho-L-threonyl-[protein] + ADP + H(+). Its activity is regulated as follows. Two specific sites, one in the kinase domain (Thr-305) and the other in the C-terminal regulatory region (Ser-472), need to be phosphorylated for its full activation. IGF-1 leads to the activation of AKT3, which may play a role in regulating cell survival. In terms of biological role, AKT3 is one of 3 closely related serine/threonine-protein kinases (AKT1, AKT2 and AKT3) called the AKT kinase, and which regulate many processes including metabolism, proliferation, cell survival, growth and angiogenesis. This is mediated through serine and/or threonine phosphorylation of a range of downstream substrates. Over 100 substrate candidates have been reported so far, but for most of them, no isoform specificity has been reported. AKT3 is the least studied AKT isoform. It plays an important role in brain development and is crucial for the viability of malignant glioma cells. AKT3 isoform may also be the key molecule in up-regulation and down-regulation of MMP13 via IL13. Required for the coordination of mitochondrial biogenesis with growth factor-induced increases in cellular energy demands. Down-regulation by RNA interference reduces the expression of the phosphorylated form of BAD, resulting in the induction of caspase-dependent apoptosis. The sequence is that of RAC-gamma serine/threonine-protein kinase (Akt3) from Mus musculus (Mouse).